We begin with the raw amino-acid sequence, 105 residues long: Large ribosomal subunit protein eL36 (105 aa).

Lys-62 is subject to N6-acetyllysine.

This sequence belongs to the eukaryotic ribosomal protein eL36 family. Component of the large ribosomal subunit.

The protein resides in the cytoplasm. The protein localises to the cytosol. Functionally, component of the large ribosomal subunit. The ribosome is a large ribonucleoprotein complex responsible for the synthesis of proteins in the cell. The protein is Large ribosomal subunit protein eL36 (RPL36) of Homo sapiens (Human).